A 629-amino-acid polypeptide reads, in one-letter code: tRNA uridine 5-carboxymethylaminomethyl modification enzyme MnmG (629 aa).

Residue 13-18 coordinates FAD; it reads GGGHAG. Residue 273–287 coordinates NAD(+); the sequence is GPRYCPSIEDKIVRF.

This sequence belongs to the MnmG family. In terms of assembly, homodimer. Heterotetramer of two MnmE and two MnmG subunits. FAD is required as a cofactor.

The protein resides in the cytoplasm. Functionally, NAD-binding protein involved in the addition of a carboxymethylaminomethyl (cmnm) group at the wobble position (U34) of certain tRNAs, forming tRNA-cmnm(5)s(2)U34. The polypeptide is tRNA uridine 5-carboxymethylaminomethyl modification enzyme MnmG (Marinomonas sp. (strain MWYL1)).